Here is a 572-residue protein sequence, read N- to C-terminus: Sulfite reductase [NADPH] hemoprotein beta-component (572 aa).

Residues Cys-437, Cys-443, Cys-482, and Cys-486 each contribute to the [4Fe-4S] cluster site. Cys-486 contributes to the siroheme binding site.

This sequence belongs to the nitrite and sulfite reductase 4Fe-4S domain family. Alpha(8)-beta(8). The alpha component is a flavoprotein, the beta component is a hemoprotein. Requires siroheme as cofactor. It depends on [4Fe-4S] cluster as a cofactor.

It carries out the reaction hydrogen sulfide + 3 NADP(+) + 3 H2O = sulfite + 3 NADPH + 4 H(+). It participates in sulfur metabolism; hydrogen sulfide biosynthesis; hydrogen sulfide from sulfite (NADPH route): step 1/1. In terms of biological role, component of the sulfite reductase complex that catalyzes the 6-electron reduction of sulfite to sulfide. This is one of several activities required for the biosynthesis of L-cysteine from sulfate. The polypeptide is Sulfite reductase [NADPH] hemoprotein beta-component (Lysinibacillus sphaericus (strain C3-41)).